The following is a 114-amino-acid chain: Large ribosomal subunit protein uL18 (114 aa).

The protein belongs to the universal ribosomal protein uL18 family. In terms of assembly, part of the 50S ribosomal subunit; part of the 5S rRNA/L5/L18/L25 subcomplex. Contacts the 5S and 23S rRNAs.

Functionally, this is one of the proteins that bind and probably mediate the attachment of the 5S RNA into the large ribosomal subunit, where it forms part of the central protuberance. In Bacteroides fragilis (strain ATCC 25285 / DSM 2151 / CCUG 4856 / JCM 11019 / LMG 10263 / NCTC 9343 / Onslow / VPI 2553 / EN-2), this protein is Large ribosomal subunit protein uL18.